Reading from the N-terminus, the 244-residue chain is tRNA (guanine-N(7)-)-methyltransferase (244 aa).

Glutamate 75, glutamate 100, aspartate 127, and aspartate 150 together coordinate S-adenosyl-L-methionine. Aspartate 150 is a catalytic residue. Substrate is bound by residues lysine 154, aspartate 186, and 223-226 (TRFE).

This sequence belongs to the class I-like SAM-binding methyltransferase superfamily. TrmB family.

The catalysed reaction is guanosine(46) in tRNA + S-adenosyl-L-methionine = N(7)-methylguanosine(46) in tRNA + S-adenosyl-L-homocysteine. It functions in the pathway tRNA modification; N(7)-methylguanine-tRNA biosynthesis. Catalyzes the formation of N(7)-methylguanine at position 46 (m7G46) in tRNA. The chain is tRNA (guanine-N(7)-)-methyltransferase from Xylella fastidiosa (strain M23).